The chain runs to 305 residues: Carbonic anhydrase 4 (305 aa).

Residues 1–17 form the signal peptide; that stretch reads MQLLLALLALAYVAPST. The region spanning 20–278 is the Alpha-carbonic anhydrase domain; that stretch reads SGWCYEIQTK…LGKRQVFKSH (259 aa). Cystine bridges form between Cys-23–Cys-35 and Cys-45–Cys-222. Residue His-87 is the Proton donor/acceptor of the active site. Residues His-114 and His-116 each coordinate Zn(2+). The N-linked (GlcNAc...) asparagine glycan is linked to Asn-123. His-139 is a Zn(2+) binding site. Asn-214 carries an N-linked (GlcNAc...) asparagine glycan. Residue 218 to 219 coordinates substrate; the sequence is TT. A lipid anchor (GPI-anchor amidated serine) is attached at Ser-277. Positions 278–305 are cleaved as a propeptide — removed in mature form; that stretch reads HAPGQLLSLPLPTLLVPTLTCLVANFLQ.

It belongs to the alpha-carbonic anhydrase family. In terms of assembly, interacts with SLC4A4. Zn(2+) is required as a cofactor.

It localises to the cell membrane. It carries out the reaction hydrogencarbonate + H(+) = CO2 + H2O. With respect to regulation, inhibited by acetazolamide. In terms of biological role, catalyzes the reversible hydration of carbon dioxide into bicarbonate and protons and thus is essential to maintaining intracellular and extracellular pH. May stimulate the sodium/bicarbonate transporter activity of SLC4A4 that acts in pH homeostasis. It is essential for acid overload removal from the retina and retina epithelium, and acid release in the choriocapillaris in the choroid. This chain is Carbonic anhydrase 4 (Ca4), found in Mus musculus (Mouse).